A 775-amino-acid polypeptide reads, in one-letter code: Dipeptidyl peptidase 4 (775 aa).

Positions 1–15 (MKLLSLLMLAGIAQA) are cleaved as a signal peptide. Residues asparagine 81, asparagine 111, asparagine 154, and asparagine 219 are each glycosylated (N-linked (GlcNAc...) asparagine). Active-site charge relay system residues include serine 613, aspartate 690, and histidine 725.

It belongs to the peptidase S9B family.

The protein resides in the secreted. It catalyses the reaction Release of an N-terminal dipeptide, Xaa-Yaa-|-Zaa-, from a polypeptide, preferentially when Yaa is Pro, provided Zaa is neither Pro nor hydroxyproline.. In terms of biological role, extracellular dipeptidyl-peptidase which removes N-terminal dipeptides sequentially from polypeptides having unsubstituted N-termini provided that the penultimate residue is proline. Contributes to pathogenicity. In Trichophyton rubrum (Athlete's foot fungus), this protein is Dipeptidyl peptidase 4 (DPP4).